The sequence spans 483 residues: Arginine/agmatine antiporter (483 aa).

The next 12 membrane-spanning stretches (helical) occupy residues 11–33 (ILGT…IFSL), 48–70 (LAWM…LSII), 90–112 (VGFT…YAVI), 127–149 (GGNT…YIVL), 156–178 (SFVN…LITA), 209–228 (TMLV…VISG), 241–263 (ILGF…GSLF), 293–315 (TGLL…EIPY), 335–357 (APSF…VYFS), 367–389 (ITGV…FSLS), 415–435 (LWLI…LLAL), and 458–477 (EILK…FLFS).

Belongs to the amino acid-polyamine-organocation (APC) superfamily. Basic amino acid/polyamine antiporter (APA) (TC 2.A.3.2) family.

It is found in the cell inner membrane. Its function is as follows. Catalyzes the exchange of L-arginine for agmatine. The arginine uptake by the bacterium in the macrophage may be a virulence factor against the host innate immune response. This is Arginine/agmatine antiporter (aaxC) from Chlamydia trachomatis serovar L2 (strain ATCC VR-902B / DSM 19102 / 434/Bu).